The following is a 126-amino-acid chain: Large ribosomal subunit protein uL22 (126 aa).

It belongs to the universal ribosomal protein uL22 family. In terms of assembly, part of the 50S ribosomal subunit.

In terms of biological role, this protein binds specifically to 23S rRNA; its binding is stimulated by other ribosomal proteins, e.g. L4, L17, and L20. It is important during the early stages of 50S assembly. It makes multiple contacts with different domains of the 23S rRNA in the assembled 50S subunit and ribosome. The globular domain of the protein is located near the polypeptide exit tunnel on the outside of the subunit, while an extended beta-hairpin is found that lines the wall of the exit tunnel in the center of the 70S ribosome. This Phenylobacterium zucineum (strain HLK1) protein is Large ribosomal subunit protein uL22.